The primary structure comprises 441 residues: Probable tRNA pseudouridine synthase D (441 aa).

Catalysis depends on D89, which acts as the Nucleophile. One can recognise a TRUD domain in the interval 168–393 (GVPNFFGVQR…SKGTRREVLL (226 aa)).

This sequence belongs to the pseudouridine synthase TruD family.

The enzyme catalyses uridine(13) in tRNA = pseudouridine(13) in tRNA. Could be responsible for synthesis of pseudouridine from uracil-13 in transfer RNAs. In Methanosarcina acetivorans (strain ATCC 35395 / DSM 2834 / JCM 12185 / C2A), this protein is Probable tRNA pseudouridine synthase D.